The chain runs to 463 residues: Glycine--tRNA ligase (463 aa).

The substrate site is built by R100 and E175. Residues 207–209 (RNE), 217–222 (FRTREF), 291–292 (EL), and 335–338 (GADR) each bind ATP. 222 to 226 (FEQME) contributes to the substrate binding site. 331–335 (EPSVG) provides a ligand contact to substrate.

It belongs to the class-II aminoacyl-tRNA synthetase family. In terms of assembly, homodimer.

It localises to the cytoplasm. The enzyme catalyses tRNA(Gly) + glycine + ATP = glycyl-tRNA(Gly) + AMP + diphosphate. Functionally, catalyzes the attachment of glycine to tRNA(Gly). The sequence is that of Glycine--tRNA ligase from Clostridium kluyveri (strain NBRC 12016).